The chain runs to 219 residues: Adenylate kinase (219 aa).

12 to 17 (GAGKGT) is an ATP binding site. Residues 32 to 61 (STGDMLRAAVKAGTPIGLQAKAVMDAGELV) are NMP. Residues Thr33, Arg38, 59–61 (ELV), 87–90 (GYPR), and Gln94 contribute to the AMP site. Residues 128 to 165 (GRFSCARCGEGYHDRYKLPKVADICDVCGSKEFKRRPD) form an LID region. Arg129 is an ATP binding site. Residues Cys132, Cys135, Cys152, and Cys155 each coordinate Zn(2+). AMP contacts are provided by Arg162 and Arg174. Position 202 (Ala202) interacts with ATP.

This sequence belongs to the adenylate kinase family. As to quaternary structure, monomer.

The protein localises to the cytoplasm. It catalyses the reaction AMP + ATP = 2 ADP. It participates in purine metabolism; AMP biosynthesis via salvage pathway; AMP from ADP: step 1/1. Catalyzes the reversible transfer of the terminal phosphate group between ATP and AMP. Plays an important role in cellular energy homeostasis and in adenine nucleotide metabolism. This chain is Adenylate kinase, found in Sphingopyxis alaskensis (strain DSM 13593 / LMG 18877 / RB2256) (Sphingomonas alaskensis).